Consider the following 296-residue polypeptide: Probable alpha-L-glutamate ligase (296 aa).

An ATP-grasp domain is found at 104–287 (LQLLARQGID…IATLMITFIE (184 aa)). Residues lysine 141, 178–179 (EF), aspartate 187, and 211–213 (RSN) contribute to the ATP site. The Mg(2+) site is built by aspartate 248, glutamate 260, and asparagine 262. Aspartate 248, glutamate 260, and asparagine 262 together coordinate Mn(2+).

The protein belongs to the RimK family. The cofactor is Mg(2+). It depends on Mn(2+) as a cofactor.

This chain is Probable alpha-L-glutamate ligase, found in Sodalis glossinidius (strain morsitans).